A 159-amino-acid polypeptide reads, in one-letter code: Phosphopantetheine adenylyltransferase (159 aa).

Residue Ser9 coordinates substrate. ATP contacts are provided by residues 9-10 (SF) and His17. Positions 41, 73, and 87 each coordinate substrate. ATP contacts are provided by residues 88 to 90 (GLR), Glu98, and 122 to 128 (YSFLSSS).

It belongs to the bacterial CoaD family. As to quaternary structure, homohexamer. Mg(2+) serves as cofactor.

The protein resides in the cytoplasm. The catalysed reaction is (R)-4'-phosphopantetheine + ATP + H(+) = 3'-dephospho-CoA + diphosphate. The protein operates within cofactor biosynthesis; coenzyme A biosynthesis; CoA from (R)-pantothenate: step 4/5. Its function is as follows. Reversibly transfers an adenylyl group from ATP to 4'-phosphopantetheine, yielding dephospho-CoA (dPCoA) and pyrophosphate. This is Phosphopantetheine adenylyltransferase from Streptomyces griseus subsp. griseus (strain JCM 4626 / CBS 651.72 / NBRC 13350 / KCC S-0626 / ISP 5235).